Consider the following 302-residue polypeptide: Giardin subunit alpha-5 (302 aa).

Annexin repeat units lie at residues 1–72, 74–144, 153–226, and 230–298; these read MTST…VNMW, SRHE…VAGW, GSVE…AAHF, and GLPV…TLWR.

This sequence belongs to the annexin family. Giardin subunit alpha subfamily.

The protein resides in the cytoplasm. Its subcellular location is the cytoskeleton. Its function is as follows. Giardins are involved in parasite attachment to the intestinal mucosa and in the cytoskeletal disassembly and reassembly that marks the transition from infectious trophozoite to transmissible cyst. They may interact with other cytoskeletal proteins such as microtubules in the microribbons or crossbridges, to maintain the integrity of the ventral disk. The chain is Giardin subunit alpha-5 from Giardia intestinalis (Giardia lamblia).